Consider the following 352-residue polypeptide: MASWPPLELQSSNQSQLFPQNATACDNAPEAWDLLHRVLPTFIISICSFGLLGNLFVLLVFLLPRRRLNVAEIYLANLAASDLVFVLGLPFWAENIWNQFNWPFGALLCRGINGVIKANLFISIFLVVAISQDRYCLLVHPMASRRRQRRRQARVTCVLIWVVGGLLSIPTFLLRSIQAVPDLNITACILLLPHEAWHFARIVELNILAFLLPLAAIVFFNYHILASLRGREEVSRTRCGGRKDSKTTALILTLVVAFLVCWAPYHFFAFLEFLFQVQAIRGCFWEDFIDLGLQLANFLAFTNSSLNPVIYVFVGRLFRTKVWELYKQCTPKSLAPISSSHRKEIFQLFWRN.

At 1-41 (MASWPPLELQSSNQSQLFPQNATACDNAPEAWDLLHRVLPT) the chain is on the extracellular side. Residues asparagine 13 and asparagine 21 are each glycosylated (N-linked (GlcNAc...) asparagine). A helical transmembrane segment spans residues 42–62 (FIISICSFGLLGNLFVLLVFL). The Cytoplasmic segment spans residues 63–72 (LPRRRLNVAE). A helical transmembrane segment spans residues 73 to 93 (IYLANLAASDLVFVLGLPFWA). Residues 94–110 (ENIWNQFNWPFGALLCR) are Extracellular-facing. Cysteine 109 and cysteine 188 are oxidised to a cystine. The helical transmembrane segment at 111-131 (GINGVIKANLFISIFLVVAIS) threads the bilayer. The Cytoplasmic portion of the chain corresponds to 132 to 153 (QDRYCLLVHPMASRRRQRRRQA). A helical transmembrane segment spans residues 154–174 (RVTCVLIWVVGGLLSIPTFLL). At 175–206 (RSIQAVPDLNITACILLLPHEAWHFARIVELN) the chain is on the extracellular side. Asparagine 184 carries N-linked (GlcNAc...) asparagine glycosylation. The helical transmembrane segment at 207-227 (ILAFLLPLAAIVFFNYHILAS) threads the bilayer. The Cytoplasmic portion of the chain corresponds to 228 to 250 (LRGREEVSRTRCGGRKDSKTTAL). The chain crosses the membrane as a helical span at residues 251–271 (ILTLVVAFLVCWAPYHFFAFL). The Extracellular segment spans residues 272 to 294 (EFLFQVQAIRGCFWEDFIDLGLQ). A helical transmembrane segment spans residues 295–315 (LANFLAFTNSSLNPVIYVFVG). The Cytoplasmic segment spans residues 316–352 (RLFRTKVWELYKQCTPKSLAPISSSHRKEIFQLFWRN). The S-palmitoyl cysteine moiety is linked to residue cysteine 329.

Belongs to the G-protein coupled receptor 1 family. Bradykinin receptor subfamily. BDKRB1 sub-subfamily.

The protein localises to the cell membrane. Functionally, this is a receptor for bradykinin. Could be a factor in chronic pain and inflammation. The chain is B1 bradykinin receptor (BDKRB1) from Chlorocebus aethiops (Green monkey).